The primary structure comprises 336 residues: tRNA N6-adenosine threonylcarbamoyltransferase (336 aa).

His-114 and His-118 together coordinate Fe cation. Substrate is bound by residues 136-140 (LVSGG), Asp-169, Gly-182, Asp-186, and Asn-275. Asp-301 is a binding site for Fe cation.

It belongs to the KAE1 / TsaD family. Fe(2+) serves as cofactor.

The protein localises to the cytoplasm. It catalyses the reaction L-threonylcarbamoyladenylate + adenosine(37) in tRNA = N(6)-L-threonylcarbamoyladenosine(37) in tRNA + AMP + H(+). In terms of biological role, required for the formation of a threonylcarbamoyl group on adenosine at position 37 (t(6)A37) in tRNAs that read codons beginning with adenine. Is involved in the transfer of the threonylcarbamoyl moiety of threonylcarbamoyl-AMP (TC-AMP) to the N6 group of A37, together with TsaE and TsaB. TsaD likely plays a direct catalytic role in this reaction. In Streptococcus pneumoniae serotype 2 (strain D39 / NCTC 7466), this protein is tRNA N6-adenosine threonylcarbamoyltransferase.